The chain runs to 432 residues: FMRFamide peptide receptor frpr-18 (432 aa).

At M1–A8 the chain is on the extracellular side. A helical membrane pass occupies residues C9–F29. Residues S30 to L42 are Cytoplasmic-facing. Residues L43–I63 form a helical membrane-spanning segment. The Extracellular segment spans residues P64–K84. A helical transmembrane segment spans residues L85–T105. At L106 to R128 the chain is on the cytoplasmic side. The chain crosses the membrane as a helical span at residues N129 to Y149. Residues R150–G176 lie on the Extracellular side of the membrane. Residues Y177–A197 form a helical membrane-spanning segment. Residues N198–T225 are Cytoplasmic-facing. Residues T226–L246 form a helical membrane-spanning segment. At N247–D271 the chain is on the extracellular side. A helical transmembrane segment spans residues L272–S292. Residues E293–C432 are Cytoplasmic-facing. Disordered stretches follow at residues I328 to S349 and K388 to E411.

This sequence belongs to the G-protein coupled receptor 1 family. As to expression, expressed in a subset of neurons in the head, midbody, and tail, including AIY, ASI, BAG, URA, CAN, I6, PVQ, DVA, RIM, and VC, and in the anal sphincter and intestinal muscles. Expression from the ASI neurons is involved in promoting arousal.

It localises to the cell membrane. G-protein coupled receptor for flp-2 neuropeptides. May act through the G(q) alpha type of G proteins. Involved in mediating arousal from the sleep-like state called lethargus, which occurs during molting between larval and adult stages, in part by regulating touch sensitivity, and working in concert with neuropeptide pdf-1. The sequence is that of FMRFamide peptide receptor frpr-18 from Caenorhabditis elegans.